Here is a 448-residue protein sequence, read N- to C-terminus: Protein TraN (448 aa).

Disordered regions lie at residues 243–273 (NRVGASRTATTARAGQQQSPAVKQSSGNSGE) and 411–448 (EAARRHQALMRKQEQEKKQAQERERGRSQSLGLSNKPS). Residues 246-261 (GASRTATTARAGQQQS) show a composition bias toward low complexity. A compositionally biased stretch (polar residues) spans 262–271 (PAVKQSSGNS). The segment covering 421–437 (RKQEQEKKQAQERERGR) has biased composition (basic and acidic residues). A compositionally biased stretch (polar residues) spans 438–448 (SQSLGLSNKPS).

This sequence to H.influenzae HI_1407.

The protein is Protein TraN (traN) of Escherichia coli.